Consider the following 157-residue polypeptide: Protein Smg (157 aa).

It belongs to the Smg family.

The protein is Protein Smg of Escherichia coli O8 (strain IAI1).